Consider the following 406-residue polypeptide: Endoplasmic reticulum resident protein 44 (406 aa).

Residues 1–29 (MNPAVFLSLADLRCSLLLLVTSIFTPITA) form the signal peptide. Positions 30 to 138 (EIASLDSENI…VKALADYIRQ (109 aa)) constitute a Thioredoxin domain. Disulfide bonds link Cys189-Cys241 and Cys301-Cys318. Residues 236 to 285 (WIQDKCVPLVREITFENGEELTEEGLPFLILFHMKDDTESLEIFQNEVAR) form an interaction with ITPR1 region. The tract at residues 360–387 (FHHGPDPTDTAPGEQDQDVASSPPESSF) is disordered. A compositionally biased stretch (polar residues) spans 377–387 (DVASSPPESSF). The Prevents secretion from ER motif lies at 403-406 (RDEL).

Forms mixed disulfides with both ERO1A and ERO1B and cargo folding intermediates; the interactions with ERO1A and ERO1B result in their retention in the endoplasmic reticulum. Directly interacts with ITPR1 in a pH-, redox state- and calcium-dependent manner, but not with ITPR2 or ITPR3. The strength of this interaction inversely correlates with calcium concentration. Widely expressed.

It localises to the endoplasmic reticulum lumen. In terms of biological role, mediates thiol-dependent retention in the early secretory pathway, forming mixed disulfides with substrate proteins through its conserved CRFS motif. Inhibits the calcium channel activity of ITPR1. May have a role in the control of oxidative protein folding in the endoplasmic reticulum. Required to retain ERO1A and ERO1B in the endoplasmic reticulum. This Mus musculus (Mouse) protein is Endoplasmic reticulum resident protein 44 (Erp44).